Consider the following 117-residue polypeptide: Pre-mRNA-splicing factor ini1 (117 aa).

It belongs to the PHF5 family.

Its subcellular location is the nucleus. Required for pre-mRNA splicing. The protein is Pre-mRNA-splicing factor ini1 (ini1) of Schizosaccharomyces pombe (strain 972 / ATCC 24843) (Fission yeast).